A 422-amino-acid polypeptide reads, in one-letter code: Serine--tRNA ligase (422 aa).

Residue 238 to 240 participates in L-serine binding; it reads TSE. 269-271 provides a ligand contact to ATP; the sequence is RKE. Glu-292 is an L-serine binding site. ATP is bound at residue 356 to 359; it reads EISS. Residue Ser-390 participates in L-serine binding.

The protein belongs to the class-II aminoacyl-tRNA synthetase family. Type-1 seryl-tRNA synthetase subfamily. As to quaternary structure, homodimer. The tRNA molecule binds across the dimer.

It localises to the cytoplasm. It catalyses the reaction tRNA(Ser) + L-serine + ATP = L-seryl-tRNA(Ser) + AMP + diphosphate + H(+). It carries out the reaction tRNA(Sec) + L-serine + ATP = L-seryl-tRNA(Sec) + AMP + diphosphate + H(+). Its pathway is aminoacyl-tRNA biosynthesis; selenocysteinyl-tRNA(Sec) biosynthesis; L-seryl-tRNA(Sec) from L-serine and tRNA(Sec): step 1/1. Catalyzes the attachment of serine to tRNA(Ser). Is also able to aminoacylate tRNA(Sec) with serine, to form the misacylated tRNA L-seryl-tRNA(Sec), which will be further converted into selenocysteinyl-tRNA(Sec). The protein is Serine--tRNA ligase of Helicobacter hepaticus (strain ATCC 51449 / 3B1).